We begin with the raw amino-acid sequence, 382 residues long: ATP phosphoribosyltransferase regulatory subunit (382 aa).

The protein belongs to the class-II aminoacyl-tRNA synthetase family. HisZ subfamily. Heteromultimer composed of HisG and HisZ subunits.

It is found in the cytoplasm. Its pathway is amino-acid biosynthesis; L-histidine biosynthesis; L-histidine from 5-phospho-alpha-D-ribose 1-diphosphate: step 1/9. In terms of biological role, required for the first step of histidine biosynthesis. May allow the feedback regulation of ATP phosphoribosyltransferase activity by histidine. The protein is ATP phosphoribosyltransferase regulatory subunit of Burkholderia thailandensis (strain ATCC 700388 / DSM 13276 / CCUG 48851 / CIP 106301 / E264).